We begin with the raw amino-acid sequence, 405 residues long: Deoxyguanosinetriphosphate triphosphohydrolase-like protein (405 aa).

Residues 75-219 (RLTHTIEVAQ…AAIADDIAYN (145 aa)) enclose the HD domain.

Belongs to the dGTPase family. Type 2 subfamily.

The sequence is that of Deoxyguanosinetriphosphate triphosphohydrolase-like protein from Rhizobium leguminosarum bv. trifolii (strain WSM2304).